We begin with the raw amino-acid sequence, 317 residues long: Cytochrome c biogenesis protein CcsA (317 aa).

7 helical membrane-spanning segments follow: residues 13 to 35 (ISFS…HEIV), 44 to 64 (GMIA…IYSG), 71 to 91 (LYES…VPYF), 143 to 163 (MLLS…LLVI), 171 to 191 (MIGF…IKYL), 225 to 245 (VIGL…VWAN), and 286 to 306 (AIVA…VNLL).

The protein belongs to the CcmF/CycK/Ccl1/NrfE/CcsA family. May interact with Ccs1.

Its subcellular location is the plastid. It is found in the chloroplast thylakoid membrane. Functionally, required during biogenesis of c-type cytochromes (cytochrome c6 and cytochrome f) at the step of heme attachment. This Illicium oligandrum (Star anise) protein is Cytochrome c biogenesis protein CcsA.